The chain runs to 224 residues: Deoxyribose-phosphate aldolase (224 aa).

D92 functions as the Proton donor/acceptor in the catalytic mechanism. The active-site Schiff-base intermediate with acetaldehyde is the K155. The active-site Proton donor/acceptor is K184.

It belongs to the DeoC/FbaB aldolase family. DeoC type 1 subfamily.

Its subcellular location is the cytoplasm. It carries out the reaction 2-deoxy-D-ribose 5-phosphate = D-glyceraldehyde 3-phosphate + acetaldehyde. It participates in carbohydrate degradation; 2-deoxy-D-ribose 1-phosphate degradation; D-glyceraldehyde 3-phosphate and acetaldehyde from 2-deoxy-alpha-D-ribose 1-phosphate: step 2/2. In terms of biological role, catalyzes a reversible aldol reaction between acetaldehyde and D-glyceraldehyde 3-phosphate to generate 2-deoxy-D-ribose 5-phosphate. This chain is Deoxyribose-phosphate aldolase, found in Shouchella clausii (strain KSM-K16) (Alkalihalobacillus clausii).